We begin with the raw amino-acid sequence, 395 residues long: Putative 8-amino-7-oxononanoate synthase (395 aa).

A substrate-binding site is contributed by arginine 23. A pyridoxal 5'-phosphate-binding site is contributed by glycine 110–tyrosine 111. Histidine 135 is a substrate binding site. Pyridoxal 5'-phosphate contacts are provided by residues serine 182, aspartate 207–histidine 210, and threonine 239–lysine 242. Residue lysine 242 is modified to N6-(pyridoxal phosphate)lysine. Residue threonine 356 participates in substrate binding.

Belongs to the class-II pyridoxal-phosphate-dependent aminotransferase family. BioF subfamily. As to quaternary structure, homodimer. The cofactor is pyridoxal 5'-phosphate.

The enzyme catalyses 6-carboxyhexanoyl-[ACP] + L-alanine + H(+) = (8S)-8-amino-7-oxononanoate + holo-[ACP] + CO2. The protein operates within cofactor biosynthesis; biotin biosynthesis. In terms of biological role, catalyzes the decarboxylative condensation of pimeloyl-[acyl-carrier protein] and L-alanine to produce 8-amino-7-oxononanoate (AON), [acyl-carrier protein], and carbon dioxide. The sequence is that of Putative 8-amino-7-oxononanoate synthase (bioF) from Bacillus cereus (strain G9842).